Consider the following 195-residue polypeptide: Imidazoleglycerol-phosphate dehydratase (195 aa).

This sequence belongs to the imidazoleglycerol-phosphate dehydratase family.

It localises to the cytoplasm. It carries out the reaction D-erythro-1-(imidazol-4-yl)glycerol 3-phosphate = 3-(imidazol-4-yl)-2-oxopropyl phosphate + H2O. It participates in amino-acid biosynthesis; L-histidine biosynthesis; L-histidine from 5-phospho-alpha-D-ribose 1-diphosphate: step 6/9. The sequence is that of Imidazoleglycerol-phosphate dehydratase from Trichlorobacter lovleyi (strain ATCC BAA-1151 / DSM 17278 / SZ) (Geobacter lovleyi).